The chain runs to 376 residues: 4-hydroxy-3-methylbut-2-en-1-yl diphosphate synthase (flavodoxin) (376 aa).

Residues C272, C275, C307, and E314 each contribute to the [4Fe-4S] cluster site.

The protein belongs to the IspG family. The cofactor is [4Fe-4S] cluster.

It catalyses the reaction (2E)-4-hydroxy-3-methylbut-2-enyl diphosphate + oxidized [flavodoxin] + H2O + 2 H(+) = 2-C-methyl-D-erythritol 2,4-cyclic diphosphate + reduced [flavodoxin]. It participates in isoprenoid biosynthesis; isopentenyl diphosphate biosynthesis via DXP pathway; isopentenyl diphosphate from 1-deoxy-D-xylulose 5-phosphate: step 5/6. Its function is as follows. Converts 2C-methyl-D-erythritol 2,4-cyclodiphosphate (ME-2,4cPP) into 1-hydroxy-2-methyl-2-(E)-butenyl 4-diphosphate. This Blochmanniella pennsylvanica (strain BPEN) protein is 4-hydroxy-3-methylbut-2-en-1-yl diphosphate synthase (flavodoxin).